The primary structure comprises 887 residues: Bifunctional uridylyltransferase/uridylyl-removing enzyme (887 aa).

Positions 1–337 are uridylyltransferase; it reads MINTSPLLNY…RLPNYERKIE (337 aa). Residues 339 to 699 form a uridylyl-removing region; that stretch reads VNDHFKIVDN…AHRKAAQDAV (361 aa). In terms of domain architecture, HD spans 457–579; that stretch reads VDAHTLLLLR…LGDMEHLDYL (123 aa). ACT domains lie at 700-782 and 809-887; these read QIFI…LMQR and MVEI…ICQH.

The protein belongs to the GlnD family. Requires Mg(2+) as cofactor.

The catalysed reaction is [protein-PII]-L-tyrosine + UTP = [protein-PII]-uridylyl-L-tyrosine + diphosphate. The enzyme catalyses [protein-PII]-uridylyl-L-tyrosine + H2O = [protein-PII]-L-tyrosine + UMP + H(+). Uridylyltransferase (UTase) activity is inhibited by glutamine, while glutamine activates uridylyl-removing (UR) activity. Modifies, by uridylylation and deuridylylation, the PII regulatory proteins (GlnB and homologs), in response to the nitrogen status of the cell that GlnD senses through the glutamine level. Under low glutamine levels, catalyzes the conversion of the PII proteins and UTP to PII-UMP and PPi, while under higher glutamine levels, GlnD hydrolyzes PII-UMP to PII and UMP (deuridylylation). Thus, controls uridylylation state and activity of the PII proteins, and plays an important role in the regulation of nitrogen assimilation and metabolism. The sequence is that of Bifunctional uridylyltransferase/uridylyl-removing enzyme from Acinetobacter baumannii (strain ATCC 17978 / DSM 105126 / CIP 53.77 / LMG 1025 / NCDC KC755 / 5377).